The sequence spans 431 residues: Putative F-box/FBD/LRR-repeat protein At4g26350 (431 aa).

The F-box domain maps to 1-47 (MDIISQCPDHLLLRILSFIPTKDVIVTSLLSKRWGSLWRWVPKLEYD). LRR repeat units follow at residues 52–78 (NMRF…HLKN), 85–109 (CRTV…EISI), 132–159 (ILTI…HLRC), 160–185 (IGWA…RLAR), and 309–334 (CTQG…TLTN). The FBD domain occupies 348–398 (CWKRPSSVPACLLSSLQAFTWSGYKGRQGDKEVVKYVLRNATGLKKRIFIS).

The polypeptide is Putative F-box/FBD/LRR-repeat protein At4g26350 (Arabidopsis thaliana (Mouse-ear cress)).